The following is a 515-amino-acid chain: ATP synthase subunit alpha (515 aa).

171–178 (GDRQTGKT) serves as a coordination point for ATP.

This sequence belongs to the ATPase alpha/beta chains family. F-type ATPases have 2 components, CF(1) - the catalytic core - and CF(0) - the membrane proton channel. CF(1) has five subunits: alpha(3), beta(3), gamma(1), delta(1), epsilon(1). CF(0) has three main subunits: a(1), b(2) and c(9-12). The alpha and beta chains form an alternating ring which encloses part of the gamma chain. CF(1) is attached to CF(0) by a central stalk formed by the gamma and epsilon chains, while a peripheral stalk is formed by the delta and b chains.

Its subcellular location is the cell inner membrane. It carries out the reaction ATP + H2O + 4 H(+)(in) = ADP + phosphate + 5 H(+)(out). Functionally, produces ATP from ADP in the presence of a proton gradient across the membrane. The alpha chain is a regulatory subunit. The polypeptide is ATP synthase subunit alpha (Xanthomonas campestris pv. campestris (strain 8004)).